We begin with the raw amino-acid sequence, 74 residues long: Protein krueppel (74 aa).

4 C2H2-type zinc fingers span residues 1-4, 10-32, 38-60, and 66-74; these read ERTH, FECP…MRLH, YHCS…LRVH, and YACELCDAR.

This sequence belongs to the krueppel C2H2-type zinc-finger protein family.

The protein localises to the nucleus. Its function is as follows. Krueppel is a gap class segmentation protein. This Psychoda cinerea (Psychod fly) protein is Protein krueppel (Kr).